Consider the following 723-residue polypeptide: Peroxisomal bifunctional enzyme (723 aa).

An enoyl-CoA hydratase / isomerase region spans residues 1-282 (MAEYTRLHNA…LAERKANKWS (282 aa)). N6-succinyllysine is present on Lys-38. Gly-101 is a binding site for substrate. Lys-165 carries the post-translational modification N6-acetyllysine; alternate. Lys-165 is subject to N6-succinyllysine; alternate. Residue Lys-171 is modified to N6-acetyllysine. At Lys-219 the chain carries N6-acetyllysine; alternate. The residue at position 219 (Lys-219) is an N6-succinyllysine; alternate. Lys-250 carries the post-translational modification N6-acetyllysine. An N6-succinyllysine mark is found at Lys-280 and Lys-290. Positions 283–572 (TPSGASWKTA…DVLCELGRFG (290 aa)) are 3-hydroxyacyl-CoA dehydrogenase. Residues Lys-346, Lys-350, and Lys-464 each carry the N6-acetyllysine modification. Lys-532 bears the N6-succinyllysine mark. Thr-548 bears the Phosphothreonine mark. An N6-succinyllysine modification is found at Lys-577. 3 positions are modified to N6-acetyllysine; alternate: Lys-584, Lys-591, and Lys-710. Residues Lys-584, Lys-591, and Lys-710 each carry the N6-succinyllysine; alternate modification. Residues 699–723 (KKLASQGNPPQKEWQSLAGSPSSKL) form a disordered region. Over residues 703–723 (SQGNPPQKEWQSLAGSPSSKL) the composition is skewed to polar residues. The residue at position 718 (Ser-718) is a Phosphoserine. The short motif at 721 to 723 (SKL) is the Microbody targeting signal element. Residue Lys-722 is modified to N6-succinyllysine.

It in the N-terminal section; belongs to the enoyl-CoA hydratase/isomerase family. In the C-terminal section; belongs to the 3-hydroxyacyl-CoA dehydrogenase family. As to quaternary structure, monomer. Acetylated, leading to enhanced enzyme activity. Acetylation is enhanced by up to 80% after treatment either with trichostin A (TSA) or with nicotinamide (NAM) with highest increase on Lys-346. Acetylation and enzyme activity increased by about 1.5% on addition of fatty acids.

Its subcellular location is the peroxisome. The catalysed reaction is a (3S)-3-hydroxyacyl-CoA = a (2E)-enoyl-CoA + H2O. The enzyme catalyses a 4-saturated-(3S)-3-hydroxyacyl-CoA = a (3E)-enoyl-CoA + H2O. It catalyses the reaction a (3Z)-enoyl-CoA = a 4-saturated (2E)-enoyl-CoA. It carries out the reaction a (3E)-enoyl-CoA = a 4-saturated (2E)-enoyl-CoA. The catalysed reaction is a (3S)-3-hydroxyacyl-CoA + NAD(+) = a 3-oxoacyl-CoA + NADH + H(+). The enzyme catalyses (2S,3S)-3-hydroxy-2-methylbutanoyl-CoA = (2E)-2-methylbut-2-enoyl-CoA + H2O. It catalyses the reaction (3S)-hydroxyhexadecanoyl-CoA + NAD(+) = 3-oxohexadecanoyl-CoA + NADH + H(+). It carries out the reaction (3S)-hydroxyhexadecanoyl-CoA = (2E)-hexadecenoyl-CoA + H2O. The catalysed reaction is (2E)-hexadecenedioyl-CoA + H2O = (3S)-hydroxyhexadecanedioyl-CoA. The enzyme catalyses (3S)-hydroxyhexadecanedioyl-CoA + NAD(+) = 3-oxohexadecanedioyl-CoA + NADH + H(+). It catalyses the reaction (3E,5Z)-tetradecadienoyl-CoA = (2E,5Z)-tetradecadienoyl-CoA. It carries out the reaction (3E,5Z)-octadienoyl-CoA = (2E,5Z)-octadienoyl-CoA. The catalysed reaction is (3S)-hydroxydecanoyl-CoA + NAD(+) = 3-oxodecanoyl-CoA + NADH + H(+). The enzyme catalyses (3E)-decenoyl-CoA = (2E)-decenoyl-CoA. It catalyses the reaction (3Z)-hexenoyl-CoA = (2E)-hexenoyl-CoA. It carries out the reaction (3E)-hexenoyl-CoA = (2E)-hexenoyl-CoA. The catalysed reaction is (3S)-hydroxydecanoyl-CoA = (2E)-decenoyl-CoA + H2O. The enzyme catalyses (3S)-hydroxyhexanoyl-CoA = (2E)-hexenoyl-CoA + H2O. Its pathway is lipid metabolism; fatty acid beta-oxidation. Its activity is regulated as follows. Enzyme activity enhanced by acetylation. Functionally, peroxisomal trifunctional enzyme possessing 2-enoyl-CoA hydratase, 3-hydroxyacyl-CoA dehydrogenase, and delta 3, delta 2-enoyl-CoA isomerase activities. Catalyzes two of the four reactions of the long chain fatty acids peroxisomal beta-oxidation pathway. Can also use branched-chain fatty acids such as 2-methyl-2E-butenoyl-CoA as a substrate, which is hydrated into (2S,3S)-3-hydroxy-2-methylbutanoyl-CoA. Optimal isomerase for 2,5 double bonds into 3,5 form isomerization in a range of enoyl-CoA species. Also able to isomerize both 3-cis and 3-trans double bonds into the 2-trans form in a range of enoyl-CoA species. Regulates the amount of medium-chain dicarboxylic fatty acids which are essential regulators of all fatty acid oxidation pathways. Also involved in the degradation of long-chain dicarboxylic acids through peroxisomal beta-oxidation. The polypeptide is Peroxisomal bifunctional enzyme (EHHADH) (Pongo abelii (Sumatran orangutan)).